The chain runs to 201 residues: Large ribosomal subunit protein uL4 (201 aa).

Positions 46–71 are disordered; the sequence is QKTRAEVVGSGKKPWRQKGTGRARAG.

This sequence belongs to the universal ribosomal protein uL4 family. In terms of assembly, part of the 50S ribosomal subunit.

One of the primary rRNA binding proteins, this protein initially binds near the 5'-end of the 23S rRNA. It is important during the early stages of 50S assembly. It makes multiple contacts with different domains of the 23S rRNA in the assembled 50S subunit and ribosome. Functionally, forms part of the polypeptide exit tunnel. This is Large ribosomal subunit protein uL4 from Shewanella piezotolerans (strain WP3 / JCM 13877).